The primary structure comprises 152 residues: Small ribosomal subunit protein uS8m (152 aa).

The protein belongs to the universal ribosomal protein uS8 family.

It is found in the mitochondrion. The sequence is that of Small ribosomal subunit protein uS8m (mrps8) from Dictyostelium citrinum (Slime mold).